Reading from the N-terminus, the 283-residue chain is Thymidylate synthase (283 aa).

Arg22 contacts dUMP. Cys160 (nucleophile) is an active-site residue. DUMP is bound by residues 180 to 183 (RSCD), Asn191, and 221 to 223 (HIY). Asp183 is a binding site for (6R)-5,10-methylene-5,6,7,8-tetrahydrofolate. Ser282 contacts (6R)-5,10-methylene-5,6,7,8-tetrahydrofolate.

Belongs to the thymidylate synthase family. Bacterial-type ThyA subfamily. Homodimer.

Its subcellular location is the cytoplasm. It carries out the reaction dUMP + (6R)-5,10-methylene-5,6,7,8-tetrahydrofolate = 7,8-dihydrofolate + dTMP. It participates in pyrimidine metabolism; dTTP biosynthesis. Catalyzes the reductive methylation of 2'-deoxyuridine-5'-monophosphate (dUMP) to 2'-deoxythymidine-5'-monophosphate (dTMP) while utilizing 5,10-methylenetetrahydrofolate (mTHF) as the methyl donor and reductant in the reaction, yielding dihydrofolate (DHF) as a by-product. This enzymatic reaction provides an intracellular de novo source of dTMP, an essential precursor for DNA biosynthesis. The sequence is that of Thymidylate synthase from Psychromonas ingrahamii (strain DSM 17664 / CCUG 51855 / 37).